The primary structure comprises 232 residues: MTAQKMSAQEIIAFIGNAEKKTNVKVTFEGALAAALPENVVKLGNVLFGDWKDIEPLLANLTENKDYVVEQDGRNSAVPLLDKRNINARIEPGAIIRDQVTIEDNAVVMMGAIINIGAEIGEGTMIDMGAILGGRATVGKNSHIGAGAVLAGVIEPASADPVRIGDNVLVGANAVIIEGVQVGSGSVVAAGAIVTQDVPDNVVVAGVPARVIKEIDEKTQQKTALEDALRNL.

It belongs to the transferase hexapeptide repeat family. DapH subfamily.

It carries out the reaction (S)-2,3,4,5-tetrahydrodipicolinate + acetyl-CoA + H2O = L-2-acetamido-6-oxoheptanedioate + CoA. It functions in the pathway amino-acid biosynthesis; L-lysine biosynthesis via DAP pathway; LL-2,6-diaminopimelate from (S)-tetrahydrodipicolinate (acetylase route): step 1/3. Its function is as follows. Catalyzes the transfer of an acetyl group from acetyl-CoA to tetrahydrodipicolinate. The protein is 2,3,4,5-tetrahydropyridine-2,6-dicarboxylate N-acetyltransferase of Streptococcus mutans serotype c (strain ATCC 700610 / UA159).